Consider the following 233-residue polypeptide: MSEKFPPLEDQNIDFTPNDKKDDDTDFLKREAEILGDEFKTEQDDILETEASPAKDDDEIRDFEEQFPDINSANGAVSSDQNGSATVSSGNDNGEADDDFSTFEGANQSTESVKEDRSEVVDQWKQRRAVEIHEKDLKDEELKKELQDEAIKHIDDFYDSYNKKKEQQLEDAAKEAEAFLKKRDEFFGQDNTTWDRALQLINQDDADIIGGRDRSKLKEILLRLKGNAKAPGA.

The tract at residues 1–124 is disordered; it reads MSEKFPPLED…EDRSEVVDQW (124 aa). Basic and acidic residues predominate over residues 17 to 43; that stretch reads PNDKKDDDTDFLKREAEILGDEFKTEQ. Phosphothreonine is present on T49. Phosphoserine is present on S52. The span at 56–67 shows a compositional bias: acidic residues; sequence DDDEIRDFEEQF. Positions 69 to 92 are enriched in polar residues; it reads DINSANGAVSSDQNGSATVSSGND. Residues 112–124 show a composition bias toward basic and acidic residues; that stretch reads SVKEDRSEVVDQW. Residues 125 to 186 are a coiled coil; sequence KQRRAVEIHE…EAFLKKRDEF (62 aa). The tract at residues 144–204 is involved in binding clathrin heavy chain; sequence KELQDEAIKH…DRALQLINQD (61 aa).

Belongs to the clathrin light chain family. In terms of assembly, clathrin coats are formed from molecules containing 3 heavy chains and 3 light chains. Interacts with the auxilin-like clathrin uncoating factor SWA2.

The protein resides in the cytoplasmic vesicle membrane. Its subcellular location is the membrane. The protein localises to the coated pit. In terms of biological role, clathrin is the major protein of the polyhedral coat of coated pits and vesicles. In yeast, it is involved in the retention of proteins in an intracellular membrane compartment, presumably the trans-Golgi. The yeast light chain is important for cell growth. The light chain may help to properly orient the assembly/ disassembly of the clathrin coats. This Saccharomyces cerevisiae (strain ATCC 204508 / S288c) (Baker's yeast) protein is Clathrin light chain (CLC1).